Reading from the N-terminus, the 56-residue chain is Aspartyl-phosphate phosphatase YisI (56 aa).

It belongs to the spo0E family.

Aspartyl-phosphate phosphatase which specifically dephosphorylates the sporulation transcription factor Spo0A-P and negatively regulates the sporulation initiation pathway in order to control the proper timing of sporulation. This chain is Aspartyl-phosphate phosphatase YisI (yisI), found in Bacillus subtilis (strain 168).